The primary structure comprises 378 residues: Dihydroorotate dehydrogenase (quinone) (378 aa).

FMN is bound by residues 79–83 (PGYDK) and T103. K83 contacts substrate. 128–132 (NRMGF) serves as a coordination point for substrate. The FMN site is built by N160 and N193. N193 lines the substrate pocket. S196 (nucleophile) is an active-site residue. N198 is a substrate binding site. FMN is bound by residues K231 and T259. 260–261 (NT) is a substrate binding site. Residues G289, G318, and 339-340 (YT) each bind FMN.

The protein belongs to the dihydroorotate dehydrogenase family. Type 2 subfamily. In terms of assembly, monomer. The cofactor is FMN.

It is found in the cell membrane. The enzyme catalyses (S)-dihydroorotate + a quinone = orotate + a quinol. The protein operates within pyrimidine metabolism; UMP biosynthesis via de novo pathway; orotate from (S)-dihydroorotate (quinone route): step 1/1. Its function is as follows. Catalyzes the conversion of dihydroorotate to orotate with quinone as electron acceptor. This is Dihydroorotate dehydrogenase (quinone) from Trichodesmium erythraeum (strain IMS101).